Here is a 1049-residue protein sequence, read N- to C-terminus: Protein phosphatase 1 regulatory subunit 12A (1049 aa).

ANK repeat units follow at residues 39–68, 72–101, 105–134, 138–164, 198–227, and 231–260; these read DDGA…DINY, DGLT…CINQ, EGWI…SVGV, EGET…RQGV, SGGT…DVNI, and DGWT…DMDV. The tract at residues 302–947 is disordered; it reads LIETTTTGDN…RPYSRFEKDD (646 aa). Residues 303-315 show a composition bias toward polar residues; the sequence is IETTTTGDNNQSV. The span at 319–341 shows a compositional bias: basic and acidic residues; it reads KSKETLLLEPEKTAPRIETLEPE. Over residues 359–371 the composition is skewed to acidic residues; sequence SEEEEEEDSESEN. Over residues 378 to 421 the composition is skewed to low complexity; sequence SSVPSSVSNSTPTTAPSSITVTSPTTPSNQVTTPTSPTKKVSTP. Over residues 426 to 436 the composition is skewed to basic and acidic residues; that stretch reads SPKEEDRKDES. Positions 473–484 are enriched in low complexity; it reads RSASSPRLSSSL. Positions 485 to 497 are enriched in basic and acidic residues; the sequence is DNKDKEKEKEKTR. Over residues 545–564 the composition is skewed to polar residues; it reads SDGTASTNRTSSYQRSTSHT. Residues 571–592 show a composition bias toward low complexity; sequence SSSRDLPAKSSSASSLEPNNSK. Polar residues predominate over residues 593–607; it reads AWQPSSYYQSYSIHR. Positions 620–639 are enriched in low complexity; the sequence is SSTSSSTTTTTTTSSVTSPT. Residues 649 to 664 show a composition bias toward basic and acidic residues; that stretch reads WAEESAEKEKEKEKES. A compositionally biased stretch (low complexity) spans 665 to 686; the sequence is ATVIPTINTAGTTTTTSTTGTV. A compositionally biased stretch (basic and acidic residues) spans 702 to 711; the sequence is VRDEESESQR. Basic residues predominate over residues 712 to 722; that stretch reads KARSRQARQSR. A compositionally biased stretch (basic and acidic residues) spans 747 to 789; sequence RPREDEKEEKEKQDKEKQEEKKETETKEDDYRSRYRSFEEKYR. Low complexity predominate over residues 790 to 819; sequence TSLASSTTASSTIPSSSSSSSSSLYSTSSL. Over residues 820–829 the composition is skewed to polar residues; sequence NRPNSLTGLT. Residues 835–863 are compositionally biased toward basic and acidic residues; the sequence is STRDTDRESDRKEKDEDRDGDDKSQPRSI. A compositionally biased stretch (basic residues) spans 864-875; it reads RDRRRPREKRRS. 2 stretches are compositionally biased toward basic and acidic residues: residues 890 to 906 and 934 to 947; these read PDHP…EPQS and GESR…EKDD.

PP1 comprises a catalytic subunit, and one or several targeting or regulatory subunits. Ppp1r12a mediates binding to myosin.

Its subcellular location is the cytoplasm. In terms of biological role, regulates myosin phosphatase activity. The polypeptide is Protein phosphatase 1 regulatory subunit 12A (ppp1r12a) (Danio rerio (Zebrafish)).